The sequence spans 363 residues: 3,4-dihydroxy-2-butanone 4-phosphate synthase (363 aa).

The interval 1-201 is DHBP synthase; that stretch reads MTLSTAQEII…VADLIEYRNK (201 aa). D-ribulose 5-phosphate-binding positions include 27-28, Asp32, 140-144, and Glu164; these read RE and RAGHT. Glu28 provides a ligand contact to Mg(2+). His143 provides a ligand contact to Mg(2+). The GTP cyclohydrolase II-like stretch occupies residues 202-363; sequence YETMIERISE…GLEIVEYVCS (162 aa).

This sequence in the N-terminal section; belongs to the DHBP synthase family. It in the C-terminal section; belongs to the GTP cyclohydrolase II family. Mg(2+) serves as cofactor. The cofactor is Mn(2+).

It catalyses the reaction D-ribulose 5-phosphate = (2S)-2-hydroxy-3-oxobutyl phosphate + formate + H(+). Its pathway is cofactor biosynthesis; riboflavin biosynthesis; 2-hydroxy-3-oxobutyl phosphate from D-ribulose 5-phosphate: step 1/1. In terms of biological role, catalyzes the conversion of D-ribulose 5-phosphate to formate and 3,4-dihydroxy-2-butanone 4-phosphate. The polypeptide is 3,4-dihydroxy-2-butanone 4-phosphate synthase (ribB) (Photobacterium phosphoreum).